The primary structure comprises 175 residues: Co-chaperone protein HscB homolog (175 aa).

Positions Ser7–Leu79 constitute a J domain.

The protein belongs to the HscB family. In terms of assembly, interacts with HscA and stimulates its ATPase activity.

Co-chaperone involved in the maturation of iron-sulfur cluster-containing proteins. Seems to help targeting proteins to be folded toward HscA. The chain is Co-chaperone protein HscB homolog from Paraburkholderia phytofirmans (strain DSM 17436 / LMG 22146 / PsJN) (Burkholderia phytofirmans).